Consider the following 645-residue polypeptide: Threonine--tRNA ligase (645 aa).

Residues 3–64 (DMINITFPDG…EQDGTITIVT (62 aa)) enclose the TGS domain. Positions 247–544 (DHRKLGKELG…LLEEYKGAFP (298 aa)) are catalytic. The Zn(2+) site is built by cysteine 340, histidine 391, and histidine 521.

It belongs to the class-II aminoacyl-tRNA synthetase family. As to quaternary structure, homodimer. The cofactor is Zn(2+).

The protein localises to the cytoplasm. The enzyme catalyses tRNA(Thr) + L-threonine + ATP = L-threonyl-tRNA(Thr) + AMP + diphosphate + H(+). Catalyzes the attachment of threonine to tRNA(Thr) in a two-step reaction: L-threonine is first activated by ATP to form Thr-AMP and then transferred to the acceptor end of tRNA(Thr). Also edits incorrectly charged L-seryl-tRNA(Thr). The chain is Threonine--tRNA ligase from Halalkalibacterium halodurans (strain ATCC BAA-125 / DSM 18197 / FERM 7344 / JCM 9153 / C-125) (Bacillus halodurans).